The chain runs to 534 residues: MFGTLGAGLSNFPWLSASILFPIGSALVIPFFPDKGDGKEVRWFALSIALITFLITVGSYINGFDINNENVQLKENISWLPDLGLTWSVGADGMSMPLILLTSFITALAVLAAWPVKFKPKLFFFLILVMDGGQIAVFAVQDMLLFFLTWELELIPVYLLLAIWGGKNRQYAATKFIIYTAGSSIFILLAALAMGFYGTEIPNFEFSHLAAQDFSQKFQILCYVGLLIAFGVKLPIVPLHTWLPDAHGEATAPVHMLLAGILLKMGGYALLRFNAQLLPVAHAQFAPLLIVLGVVNIIYAALTSFAQRNLKRKIAYSSISHMGFVLIGIGSFSSLGTSGAMLQMVSHGLIGASLFFLVGATYDRTKTLKLDEMSGVGQKMRIMFALWTACSLASLALPGMSGFVSELMVFTGFVTDEVYTLPFRVVMASLAAIGVILTPIYLLSMLREIFFGKENPKLIEERKLIDAEPREVYIIACLLLPIIGIGLYPRLVTESYIASINNLVDRDLTAVKSAVKTNIFSGTKKNEILKAPTI.

A run of 14 helical transmembrane segments spans residues 12-32 (FPWLSASILFPIGSALVIPFF), 44-64 (FALSIALITFLITVGSYINGF), 96-116 (MPLILLTSFITALAVLAAWPV), 120-140 (PKLFFFLILVMDGGQIAVFAV), 144-164 (LLFFLTWELELIPVYLLLAIW), 176-196 (FIIYTAGSSIFILLAALAMGF), 220-240 (ILCYVGLLIAFGVKLPIVPLH), 251-271 (TAPVHMLLAGILLKMGGYALL), 285-305 (FAPLLIVLGVVNIIYAALTSF), 314-334 (IAYSSISHMGFVLIGIGSFSS), 340-360 (AMLQMVSHGLIGASLFFLVGA), 384-404 (FALWTACSLASLALPGMSGFV), 425-445 (VVMASLAAIGVILTPIYLLSM), and 472-492 (VYIIACLLLPIIGIGLYPRLV).

Belongs to the complex I subunit 4 family.

It localises to the cellular thylakoid membrane. The catalysed reaction is a plastoquinone + NADH + (n+1) H(+)(in) = a plastoquinol + NAD(+) + n H(+)(out). It catalyses the reaction a plastoquinone + NADPH + (n+1) H(+)(in) = a plastoquinol + NADP(+) + n H(+)(out). NDH-1 shuttles electrons from NAD(P)H, via FMN and iron-sulfur (Fe-S) centers, to quinones in the respiratory chain. The immediate electron acceptor for the enzyme in this species is believed to be plastoquinone. Couples the redox reaction to proton translocation (for every two electrons transferred, four hydrogen ions are translocated across the cytoplasmic membrane), and thus conserves the redox energy in a proton gradient. This is NAD(P)H-quinone oxidoreductase chain 4 from Prochlorococcus marinus (strain MIT 9215).